Consider the following 331-residue polypeptide: Biotin synthase (331 aa).

In terms of domain architecture, Radical SAM core spans 53-271 (TELQLSQLLS…IAVARIVCPK (219 aa)). [4Fe-4S] cluster-binding residues include Cys-68, Cys-72, and Cys-75. [2Fe-2S] cluster contacts are provided by Cys-112, Cys-143, Cys-203, and Arg-275.

It belongs to the radical SAM superfamily. Biotin synthase family. As to quaternary structure, homodimer. It depends on [4Fe-4S] cluster as a cofactor. [2Fe-2S] cluster is required as a cofactor.

It catalyses the reaction (4R,5S)-dethiobiotin + (sulfur carrier)-SH + 2 reduced [2Fe-2S]-[ferredoxin] + 2 S-adenosyl-L-methionine = (sulfur carrier)-H + biotin + 2 5'-deoxyadenosine + 2 L-methionine + 2 oxidized [2Fe-2S]-[ferredoxin]. Its pathway is cofactor biosynthesis; biotin biosynthesis; biotin from 7,8-diaminononanoate: step 2/2. Functionally, catalyzes the conversion of dethiobiotin (DTB) to biotin by the insertion of a sulfur atom into dethiobiotin via a radical-based mechanism. The sequence is that of Biotin synthase from Phenylobacterium zucineum (strain HLK1).